Reading from the N-terminus, the 1605-residue chain is Pentafunctional AROM polypeptide (1605 aa).

The segment at 1–384 is 3-dehydroquinate synthase; it reads MTGPTKISIL…YEPRASVVPN (384 aa). NAD(+)-binding positions include 44 to 46, 81 to 84, 114 to 116, and D119; these read DTN, EVSK, and GGV. R130 is a binding site for 7-phospho-2-dehydro-3-deoxy-D-arabino-heptonate. 139–140 lines the NAD(+) pocket; it reads TT. 7-phospho-2-dehydro-3-deoxy-D-arabino-heptonate-binding residues include D146 and K152. K161 is an NAD(+) binding site. N162 is a binding site for 7-phospho-2-dehydro-3-deoxy-D-arabino-heptonate. Residues 179–182 and N190 each bind NAD(+); that span reads FLET. E194 provides a ligand contact to Zn(2+). 7-phospho-2-dehydro-3-deoxy-D-arabino-heptonate is bound by residues 194–197 and K250; that span reads EVIK. E260 functions as the Proton acceptor; for 3-dehydroquinate synthase activity in the catalytic mechanism. Residues 264–268 and H271 contribute to the 7-phospho-2-dehydro-3-deoxy-D-arabino-heptonate site; that span reads RNLLN. Position 271 (H271) interacts with Zn(2+). The active-site Proton acceptor; for 3-dehydroquinate synthase activity is H275. Positions 287 and 356 each coordinate 7-phospho-2-dehydro-3-deoxy-D-arabino-heptonate. Residue H287 coordinates Zn(2+). Positions 397 to 842 are EPSP synthase; that stretch reads VHPGVSTTSE…WDTLRQKFAV (446 aa). The active-site For EPSP synthase activity is C824. The interval 864–1055 is shikimate kinase; sequence SASVFIIGMR…KKKQHSFFVS (192 aa). 871-878 is a binding site for ATP; it reads GMRGAGKT. Residues 1056-1276 are 3-dehydroquinase; sequence LTLPDVRGAD…AAPGQLSATD (221 aa). H1179 (proton acceptor; for 3-dehydroquinate dehydratase activity) is an active-site residue. Residue K1207 is the Schiff-base intermediate with substrate; for 3-dehydroquinate dehydratase activity of the active site. The interval 1289–1605 is shikimate dehydrogenase; the sequence is KKRFALFGSP…LSGRTMLTCS (317 aa).

This sequence in the N-terminal section; belongs to the sugar phosphate cyclases superfamily. Dehydroquinate synthase family. The protein in the 2nd section; belongs to the EPSP synthase family. It in the 3rd section; belongs to the shikimate kinase family. In the 4th section; belongs to the type-I 3-dehydroquinase family. This sequence in the C-terminal section; belongs to the shikimate dehydrogenase family. As to quaternary structure, homodimer. It depends on Zn(2+) as a cofactor.

The protein resides in the cytoplasm. It carries out the reaction 7-phospho-2-dehydro-3-deoxy-D-arabino-heptonate = 3-dehydroquinate + phosphate. It catalyses the reaction 3-dehydroquinate = 3-dehydroshikimate + H2O. The enzyme catalyses shikimate + NADP(+) = 3-dehydroshikimate + NADPH + H(+). The catalysed reaction is shikimate + ATP = 3-phosphoshikimate + ADP + H(+). It carries out the reaction 3-phosphoshikimate + phosphoenolpyruvate = 5-O-(1-carboxyvinyl)-3-phosphoshikimate + phosphate. It participates in metabolic intermediate biosynthesis; chorismate biosynthesis; chorismate from D-erythrose 4-phosphate and phosphoenolpyruvate: step 2/7. It functions in the pathway metabolic intermediate biosynthesis; chorismate biosynthesis; chorismate from D-erythrose 4-phosphate and phosphoenolpyruvate: step 3/7. Its pathway is metabolic intermediate biosynthesis; chorismate biosynthesis; chorismate from D-erythrose 4-phosphate and phosphoenolpyruvate: step 4/7. The protein operates within metabolic intermediate biosynthesis; chorismate biosynthesis; chorismate from D-erythrose 4-phosphate and phosphoenolpyruvate: step 5/7. It participates in metabolic intermediate biosynthesis; chorismate biosynthesis; chorismate from D-erythrose 4-phosphate and phosphoenolpyruvate: step 6/7. In terms of biological role, the AROM polypeptide catalyzes 5 consecutive enzymatic reactions in prechorismate polyaromatic amino acid biosynthesis. The chain is Pentafunctional AROM polypeptide from Aspergillus fumigatus (strain CBS 144.89 / FGSC A1163 / CEA10) (Neosartorya fumigata).